The primary structure comprises 412 residues: Regulator of microtubule dynamics protein 2 (412 aa).

A helical transmembrane segment spans residues 9-28 (LLLGIMAGTAGISLLVLWYH). Ser-51 carries the phosphoserine modification. Residues 72-110 (QLQILEKLNELLTNVEELKEEIKFLKETIPKLEECIQDE) are a coiled coil. Ser-121 carries the phosphoserine modification. The segment at 122–153 (PQHRARKKKTTTTTVQRPATSNSSEEAESEGG) is disordered. Residue Thr-141 is modified to Phosphothreonine. Tyr-154 is subject to Phosphotyrosine. Thr-156 and Thr-159 each carry phosphothreonine.

Belongs to the RMDN family. Interacts with microtubules.

The protein localises to the membrane. Its subcellular location is the cytoplasm. It is found in the cytoskeleton. The protein resides in the spindle. It localises to the spindle pole. This Rattus norvegicus (Rat) protein is Regulator of microtubule dynamics protein 2 (Rmdn2).